Here is a 599-residue protein sequence, read N- to C-terminus: uncharacterized protein (599 aa).

This is an uncharacterized protein from Acanthamoeba polyphaga (Amoeba).